Here is a 227-residue protein sequence, read N- to C-terminus: tRNA (guanine-N(1)-)-methyltransferase (227 aa).

S-adenosyl-L-methionine contacts are provided by residues Gly-110 and Ile-129–Leu-134.

Belongs to the RNA methyltransferase TrmD family. As to quaternary structure, homodimer.

The protein localises to the cytoplasm. It catalyses the reaction guanosine(37) in tRNA + S-adenosyl-L-methionine = N(1)-methylguanosine(37) in tRNA + S-adenosyl-L-homocysteine + H(+). Specifically methylates guanosine-37 in various tRNAs. This is tRNA (guanine-N(1)-)-methyltransferase from Mycoplasmopsis agalactiae (strain NCTC 10123 / CIP 59.7 / PG2) (Mycoplasma agalactiae).